We begin with the raw amino-acid sequence, 387 residues long: Yellow-related salivary protein ASP2 (387 aa).

The first 18 residues, 1–18, serve as a signal peptide directing secretion; it reads MKIFLCLIVVVSLQGVLA.

The protein belongs to the major royal jelly protein family. Female salivary gland (at protein level).

Its subcellular location is the secreted. Functionally, probably modulates blood feeding of sand flies on vertebrate species by binding and sequestering different mediators involved in the host response. Binds biogenic amines. Binds octopamine with high affinity. Binds serotonin and dopamine with medium affinity. Poorly binds histamine. Does not bind noradrenaline and adrenaline. The chain is Yellow-related salivary protein ASP2 from Phlebotomus orientalis (Phlebotomine sand fly).